Reading from the N-terminus, the 577-residue chain is Arginine--tRNA ligase (577 aa).

The 'HIGH' region signature appears at 122–132 (PNVAKEMHVGH).

It belongs to the class-I aminoacyl-tRNA synthetase family. In terms of assembly, monomer.

It localises to the cytoplasm. The catalysed reaction is tRNA(Arg) + L-arginine + ATP = L-arginyl-tRNA(Arg) + AMP + diphosphate. The chain is Arginine--tRNA ligase from Escherichia coli O1:K1 / APEC.